A 353-amino-acid polypeptide reads, in one-letter code: Colistin resistance protein EmrA (353 aa).

The helical transmembrane segment at 21–41 threads the bilayer; sequence WGVFSVLLLFLVAGILYYFFV. Positions 132-204 form a coiled coil; the sequence is VVAAQADLAR…QASRAQLLAD (73 aa).

It belongs to the membrane fusion protein (MFP) (TC 8.A.1) family.

The protein localises to the cell inner membrane. Its function is as follows. Probably part of an efflux pump system that contributes to adaptation to osmotic stress and resistance to colistin. The protein is Colistin resistance protein EmrA of Acinetobacter baumannii (strain ATCC 17978 / DSM 105126 / CIP 53.77 / LMG 1025 / NCDC KC755 / 5377).